The primary structure comprises 801 residues: Phosphatidylinositol 3-kinase pik3 (801 aa).

The C2 PI3K-type domain maps to 14–166 (VTARFLVKFC…RLDGLLLKLQ (153 aa)). Residues 257-439 (DKDLKPNSKI…SSVMFLFQKE (183 aa)) form the PIK helical domain. Residues 515–785 (IPDACTVFKS…LINDSVSALF (271 aa)) form the PI3K/PI4K catalytic domain. Residues 521 to 527 (VFKSTMQ) are G-loop. A catalytic loop region spans residues 654–662 (GVGDRHLDN). An activation loop region spans residues 673 to 694 (HADFGYILGRDPKLFSPAMKLS).

Belongs to the PI3/PI4-kinase family. In terms of assembly, component of the autophagy-specific vps34 PI3-kinase complex I composed of vps15, atg6, pik3/vps34, atg14 and atg38. Also a component of the VPS34 PI3-kinase complex II composed of atg6, pik3, vps15 and vps38.

It catalyses the reaction a 1,2-diacyl-sn-glycero-3-phospho-(1D-myo-inositol) + ATP = a 1,2-diacyl-sn-glycero-3-phospho-(1D-myo-inositol-3-phosphate) + ADP + H(+). Its function is as follows. Phosphatidylinositol 3-kinase that functions as a part of the autophagy-specific VPS34 PI3-kinase complex I that plays a role in autophagosome assembly. This complex is essential to recruit the atg8-phosphatidylinositol conjugate and the atg12-atg5 conjugate to the pre-autophagosomal structure. Also functions as part of the VPS34 PI3-kinase complex II. The protein is Phosphatidylinositol 3-kinase pik3 (pik3) of Schizosaccharomyces pombe (strain 972 / ATCC 24843) (Fission yeast).